Consider the following 275-residue polypeptide: 4-diphosphocytidyl-2-C-methyl-D-erythritol kinase (275 aa).

Residue lysine 8 is part of the active site. An ATP-binding site is contributed by 86-96 (PEGAGLGGGSS). Aspartate 125 is an active-site residue.

It belongs to the GHMP kinase family. IspE subfamily.

The enzyme catalyses 4-CDP-2-C-methyl-D-erythritol + ATP = 4-CDP-2-C-methyl-D-erythritol 2-phosphate + ADP + H(+). Its pathway is isoprenoid biosynthesis; isopentenyl diphosphate biosynthesis via DXP pathway; isopentenyl diphosphate from 1-deoxy-D-xylulose 5-phosphate: step 3/6. Catalyzes the phosphorylation of the position 2 hydroxy group of 4-diphosphocytidyl-2C-methyl-D-erythritol. The chain is 4-diphosphocytidyl-2-C-methyl-D-erythritol kinase from Thermus thermophilus (strain ATCC BAA-163 / DSM 7039 / HB27).